Consider the following 690-residue polypeptide: Copper-exporting P-type ATPase B (690 aa).

Residues 1-64 (MHEHDSHGEA…MEDFKKRFYV (64 aa)) lie on the Cytoplasmic side of the membrane. The tract at residues 23–46 (QHHEHHGHEEEHSAHHEKMKHSAD) is disordered. Over residues 28-46 (HGHEEEHSAHHEKMKHSAD) the composition is skewed to basic and acidic residues. The chain crosses the membrane as a helical span at residues 65 to 85 (STLLTIPILILSPAIQTFLGF). The Extracellular portion of the chain corresponds to 86–91 (RVEFAG). The helical transmembrane segment at 92-112 (SLYILFLLSSAVYFYGGYPFL) threads the bilayer. The Cytoplasmic portion of the chain corresponds to 113-127 (KGIFDELRRRQPGMM). Residues 128–148 (TLIAVAISVAYFYSSAVVFGL) form a helical membrane-spanning segment. Over 149–151 (KGK) the chain is Extracellular. Residues 152 to 172 (FFFWELATLIDIMLLGHYIEM) form a helical membrane-spanning segment. Residues 173 to 303 (RSVLGASRAL…KSRTQDLANR (131 aa)) are Cytoplasmic-facing. A helical transmembrane segment spans residues 304–324 (AALLLTVIALTVGSVTLAIWL). The Extracellular segment spans residues 325-336 (AYIADFAFAIER). A helical membrane pass occupies residues 337 to 357 (AVTVMVITCPHALGLAIPLVV). At 358–640 (AVSTSLAAKS…RKTYSKMKQN (283 aa)) the chain is on the cytoplasmic side. Residue Asp389 is the 4-aspartylphosphate intermediate of the active site. Residues 390–391 (KT), 537–538 (TG), and Lys565 contribute to the phosphate site. 2 residues coordinate Mg(2+): Asp583 and Asp587. A helical membrane pass occupies residues 641–661 (LLWATGYNAFAIPLAAGVLYS). The Extracellular segment spans residues 662-663 (AG). Residues 664 to 684 (ILLSPAVGAILMSLSTVIVAI) traverse the membrane as a helical segment. Over 685–690 (NARLLR) the chain is Cytoplasmic.

Belongs to the cation transport ATPase (P-type) (TC 3.A.3) family. Type IB subfamily.

It is found in the cell membrane. It catalyses the reaction Cu(2+)(in) + ATP + H2O = Cu(2+)(out) + ADP + phosphate + H(+). Activated by Cu(2+) and to a lesser extent by Ag(+) and Cu(+). Its function is as follows. Involved in copper export. In Archaeoglobus fulgidus (strain ATCC 49558 / DSM 4304 / JCM 9628 / NBRC 100126 / VC-16), this protein is Copper-exporting P-type ATPase B (copB).